Here is an 88-residue protein sequence, read N- to C-terminus: Small ribosomal subunit protein uS17 (88 aa).

Belongs to the universal ribosomal protein uS17 family. In terms of assembly, part of the 30S ribosomal subunit.

Functionally, one of the primary rRNA binding proteins, it binds specifically to the 5'-end of 16S ribosomal RNA. The protein is Small ribosomal subunit protein uS17 of Synechococcus sp. (strain CC9311).